The primary structure comprises 331 residues: uncharacterized protein (331 aa).

Disordered stretches follow at residues 131-163 and 190-209; these read ISHA…KKRS and DEQK…VQSS. The segment covering 140 to 162 has biased composition (basic residues); the sequence is RPKPTKPRASRKRAAIAQSKKKR. Positions 195–209 are enriched in polar residues; it reads RQSTSQPDKEIVQSS.

This is an uncharacterized protein from Caenorhabditis elegans.